The sequence spans 197 residues: Phosphoheptose isomerase (197 aa).

One can recognise an SIS domain in the interval 34–196 (MVQCLLGGNK…DRTLFPQDDQ (163 aa)). 49 to 51 (NGG) serves as a coordination point for substrate. Residues histidine 58 and glutamate 62 each coordinate Zn(2+). Residues glutamate 62, 91 to 92 (ND), 117 to 119 (STS), serine 122, and glutamine 172 each bind substrate. Residues glutamine 172 and histidine 180 each coordinate Zn(2+).

It belongs to the SIS family. GmhA subfamily. As to quaternary structure, homotetramer. Requires Zn(2+) as cofactor.

It localises to the cytoplasm. The catalysed reaction is 2 D-sedoheptulose 7-phosphate = D-glycero-alpha-D-manno-heptose 7-phosphate + D-glycero-beta-D-manno-heptose 7-phosphate. It participates in carbohydrate biosynthesis; D-glycero-D-manno-heptose 7-phosphate biosynthesis; D-glycero-alpha-D-manno-heptose 7-phosphate and D-glycero-beta-D-manno-heptose 7-phosphate from sedoheptulose 7-phosphate: step 1/1. Catalyzes the isomerization of sedoheptulose 7-phosphate in D-glycero-D-manno-heptose 7-phosphate. In Shewanella loihica (strain ATCC BAA-1088 / PV-4), this protein is Phosphoheptose isomerase.